A 221-amino-acid chain; its full sequence is Uridylate kinase (221 aa).

7–11 contacts ATP; that stretch reads KISGK. UMP is bound at residue Gly43. ATP is bound by residues Gly44 and Arg48. Residues Asp62 and 109 to 115 contribute to the UMP site; that span reads LQPGQST. ATP-binding residues include Thr135 and Tyr141.

The protein belongs to the UMP kinase family. In terms of assembly, homohexamer.

The protein localises to the cytoplasm. The catalysed reaction is UMP + ATP = UDP + ADP. The protein operates within pyrimidine metabolism; CTP biosynthesis via de novo pathway; UDP from UMP (UMPK route): step 1/1. With respect to regulation, inhibited by UTP. Catalyzes the reversible phosphorylation of UMP to UDP. In Ignicoccus hospitalis (strain KIN4/I / DSM 18386 / JCM 14125), this protein is Uridylate kinase.